A 496-amino-acid chain; its full sequence is Membrane-bound lytic murein transglycosylase F (496 aa).

An N-terminal signal peptide occupies residues 1–29 (MFFRPDFRPRCAKWLIATGLFLMLGACVE). Residues 30–267 (KPTTLERVKE…RLKDRYYGHV (238 aa)) are non-LT domain. Positions 268 to 496 (DVLGYVGAYT…SGSSPDKPAL (229 aa)) are LT domain. Glu-314 is a catalytic residue. The interval 464–496 (VADGNLHVPGVDKTQPPAPPAPASGSSPDKPAL) is disordered. Low complexity predominate over residues 486–496 (ASGSSPDKPAL).

This sequence in the N-terminal section; belongs to the bacterial solute-binding protein 3 family. It in the C-terminal section; belongs to the transglycosylase Slt family.

The protein localises to the cell outer membrane. The enzyme catalyses Exolytic cleavage of the (1-&gt;4)-beta-glycosidic linkage between N-acetylmuramic acid (MurNAc) and N-acetylglucosamine (GlcNAc) residues in peptidoglycan, from either the reducing or the non-reducing ends of the peptidoglycan chains, with concomitant formation of a 1,6-anhydrobond in the MurNAc residue.. In terms of biological role, murein-degrading enzyme that degrades murein glycan strands and insoluble, high-molecular weight murein sacculi, with the concomitant formation of a 1,6-anhydromuramoyl product. Lytic transglycosylases (LTs) play an integral role in the metabolism of the peptidoglycan (PG) sacculus. Their lytic action creates space within the PG sacculus to allow for its expansion as well as for the insertion of various structures such as secretion systems and flagella. The protein is Membrane-bound lytic murein transglycosylase F of Pseudomonas savastanoi pv. phaseolicola (strain 1448A / Race 6) (Pseudomonas syringae pv. phaseolicola (strain 1448A / Race 6)).